The sequence spans 101 residues: Small ribosomal subunit protein uS14 (101 aa).

It belongs to the universal ribosomal protein uS14 family. As to quaternary structure, part of the 30S ribosomal subunit. Contacts proteins S3 and S10.

Its function is as follows. Binds 16S rRNA, required for the assembly of 30S particles and may also be responsible for determining the conformation of the 16S rRNA at the A site. The protein is Small ribosomal subunit protein uS14 of Shewanella frigidimarina (strain NCIMB 400).